The primary structure comprises 334 residues: Iron-uptake system permease protein FeuB (334 aa).

9 consecutive transmembrane segments (helical) span residues isoleucine 9–glycine 29, alanine 63–isoleucine 83, proline 91–leucine 111, methionine 119–alanine 139, leucine 150–isoleucine 170, proline 191–leucine 211, valine 243–valine 263, proline 281–isoleucine 301, and phenylalanine 305–isoleucine 325.

It belongs to the binding-protein-dependent transport system permease family. FecCD subfamily. The complex is composed of one ATP-binding protein (YusV), two transmembrane proteins (FeuB and FeuC) and a solute-binding protein (FeuA).

It localises to the cell membrane. Its subcellular location is the membrane raft. Involved in the uptake of iron. Probably responsible for the translocation of the substrate across the membrane. Its function is as follows. Part of the ABC transporter complex FeuABC/YusV involved in import of the catecholate siderophores bacillibactin and enterobactin. The polypeptide is Iron-uptake system permease protein FeuB (feuB) (Bacillus subtilis (strain 168)).